The following is a 518-amino-acid chain: Putative Rieske 2Fe-2S iron-sulfur protein MSMEG_6410/MSMEI_6242 (518 aa).

An Isoglutamyl lysine isopeptide (Lys-Gln) (interchain with Q-Cter in protein Pup) cross-link involves residue Lys-375. One can recognise a Rieske domain in the interval 431 to 518; it reads LYTFFKCLTD…KGHELRCQKL (88 aa). Residues Cys-471, His-473, Cys-491, and His-494 each coordinate [2Fe-2S] cluster.

[2Fe-2S] cluster is required as a cofactor.

The sequence is that of Putative Rieske 2Fe-2S iron-sulfur protein MSMEG_6410/MSMEI_6242 from Mycolicibacterium smegmatis (strain ATCC 700084 / mc(2)155) (Mycobacterium smegmatis).